Here is a 197-residue protein sequence, read N- to C-terminus: Probable thymidylate kinase (197 aa).

7-14 (GLDGSGKT) serves as a coordination point for ATP.

It belongs to the thymidylate kinase family.

It catalyses the reaction dTMP + ATP = dTDP + ADP. The sequence is that of Probable thymidylate kinase from Halorubrum lacusprofundi (strain ATCC 49239 / DSM 5036 / JCM 8891 / ACAM 34).